Here is a 106-residue protein sequence, read N- to C-terminus: Immunoglobulin lambda constant 6 (106 aa).

One can recognise an Ig-like domain in the interval 7–101 (PSVTLFPPSS…EGSTVEKTVA (95 aa)). C28 and C87 are joined by a disulfide.

In terms of assembly, immunoglobulins are composed of two identical heavy chains and two identical light chains; disulfide-linked.

Its subcellular location is the secreted. It localises to the cell membrane. In terms of biological role, constant region of immunoglobulin light chains. Immunoglobulins, also known as antibodies, are membrane-bound or secreted glycoproteins produced by B lymphocytes. In the recognition phase of humoral immunity, the membrane-bound immunoglobulins serve as receptors which, upon binding of a specific antigen, trigger the clonal expansion and differentiation of B lymphocytes into immunoglobulins-secreting plasma cells. Secreted immunoglobulins mediate the effector phase of humoral immunity, which results in the elimination of bound antigens. The antigen binding site is formed by the variable domain of one heavy chain, together with that of its associated light chain. Thus, each immunoglobulin has two antigen binding sites with remarkable affinity for a particular antigen. The variable domains are assembled by a process called V-(D)-J rearrangement and can then be subjected to somatic hypermutations which, after exposure to antigen and selection, allow affinity maturation for a particular antigen. The chain is Immunoglobulin lambda constant 6 from Homo sapiens (Human).